The chain runs to 252 residues: F-box/SPRY domain-containing protein 1 (252 aa).

The 48-residue stretch at 1 to 48 folds into the F-box domain; it reads MVDPLCNYNVLEAIFSYLELSDLSRCSQVCKSWYHFLNDENSDVWRWH. Residues 58-250 form the B30.2/SPRY domain; the sequence is IKSDLLASVT…VSMVYLGTPL (193 aa).

This sequence belongs to the FBXO45/Fsn family. As to quaternary structure, component of an E3 ubiquitin ligase complex composed of hiw and Fsn.

Its subcellular location is the synapse. It functions in the pathway protein modification; protein ubiquitination. Its function is as follows. Required in the presynaptic motoneuron to down-regulate the levels of wnd and restrain synaptic terminal growth at the neuromuscular junction (NMJ). This chain is F-box/SPRY domain-containing protein 1, found in Drosophila mojavensis (Fruit fly).